The following is a 309-amino-acid chain: Short-chain dehydrogenase/reductase ARMGADRAFT_1048226 (309 aa).

Positions 64, 86, 113, and 145 each coordinate NADP(+). Ser167 (proton donor) is an active-site residue. Tyr196 and Lys200 together coordinate NADP(+). The active-site Proton acceptor is the Tyr196. Lys200 serves as the catalytic Lowers pKa of active site Tyr.

Belongs to the short-chain dehydrogenases/reductases (SDR) family.

The protein operates within secondary metabolite biosynthesis. Functionally, short-chain dehydrogenase/reductase, part of the gene cluster that mediates the biosynthesis of melleolides, a range of antifungal and phytotoxic polyketide derivatives composed of an orsellinic acid (OA) moiety esterified to various sesquiterpene alcohols. The first step in melleolides biosynthesis is performed by the delta(6)-protoilludene synthase PRO1 which catalyzes the cyclization of farnesyl diphosphate to protoilludene. The orsellinic acid synthase armB produces OA by condensing acetyl-CoA with 3 malonyl-CoA units in a three-round chain elongation reaction folowed by a C2-C7 ring closure. ArmB further catalyzes the trans-esterification of OA to the various sesquiterpene alcohols resulting from the hydroxylation of protoilludene. The melleolides cluster also includes 5 cytochrome P450 monooxygenases, 4 NAD(+)-dependent oxidoreductases, one flavin-dependent oxidoreductase, and one O-methyltransferase. The cytochrome P450 monooxygenases may be involved in protoilludene hydroxylation to elaborate melleolides with multiple alcohol groups, such as melleolide D, which carries alcohol functionalities at C-4, C-5, C-10, and C-13. The role of the NAD(+)-dependent enzymes remains unknown. Numerous melleolides, including arnamial, show 5'-O-methylation of the aromatic moiety which may be catalyzed by the methyltransferase encoded in the cluster. The flavin-dependent oxidoreductase might represent the dehydrogenase yielding the aldehyde in position 1 of arnamial and other melleolides. Finally, several halogenase localized outside of the cluster, are able to catalyze the transfer of a single chlorine atom to the melleolide backbone, resulting in a 6'-chloromelleolide product. This chain is Short-chain dehydrogenase/reductase ARMGADRAFT_1048226, found in Armillaria gallica (Bulbous honey fungus).